The primary structure comprises 373 residues: MNETDIKFLESAFKKYYFEQFELIRVPERTSEREFGYQKFNSGMTRHISVKDDKELHLLLMQNVPSDVYCSNAYYSFPNLPMNEKDWKEADLIFDIDAKDLNLSCRGNHTLSICNECHEISNNSEKCSKCNSTKLEKKSLPCKNCIDSSKIEVKKLSEILTNDLSVNKDDIQVYFSGNEGFHIYVYNSQFQQNGSRERSELVDYIMFNGAIPEKFGMKKFKPNRNSFPDFDEAGWKGRFSKYVYGSKSKRSKIVSELLSNGYSSFQKTLDDVSENIGTKIDPNVTMDIHRIFRLPGSINSKSGLTKIHCKDLVKFDAYVDSSFLSDDSVEVLANCPIEFKLKNKKFGPYHNEKVSVPTFAAVYMVCKKLATIA.

Active-site residues include Asp95, Asp97, and Asp281.

Belongs to the eukaryotic-type primase small subunit family. As to quaternary structure, heterodimer of a small subunit (PriS) and a large subunit (PriL). Mg(2+) is required as a cofactor. The cofactor is Mn(2+).

In terms of biological role, catalytic subunit of DNA primase, an RNA polymerase that catalyzes the synthesis of short RNA molecules used as primers for DNA polymerase during DNA replication. The small subunit contains the primase catalytic core and has DNA synthesis activity on its own. Binding to the large subunit stabilizes and modulates the activity, increasing the rate of DNA synthesis while decreasing the length of the DNA fragments, and conferring RNA synthesis capability. The DNA polymerase activity may enable DNA primase to also catalyze primer extension after primer synthesis. May also play a role in DNA repair. The polypeptide is DNA primase small subunit PriS (Nitrosopumilus maritimus (strain SCM1)).